The primary structure comprises 348 residues: Malyl-CoA/beta-methylmalyl-CoA/citramalyl-CoA lyase (348 aa).

Residues 32 to 33, Lys40, and Arg92 contribute to the substrate site; that span reads HF. The Mg(2+) site is built by Glu157 and Asp184. Residues 183–184 and Leu274 each bind substrate; that span reads AD.

Belongs to the HpcH/HpaI aldolase family. In terms of assembly, homohexamer. Dimer of trimers. Mg(2+) is required as a cofactor. The cofactor is Mn(2+).

The catalysed reaction is (S)-malyl-CoA = glyoxylate + acetyl-CoA. The enzyme catalyses (2R,3S)-beta-methylmalyl-CoA = propanoyl-CoA + glyoxylate. It catalyses the reaction (3S)-citramalyl-CoA = pyruvate + acetyl-CoA. With respect to regulation, inhibited by oxalate. Functionally, involved in the 3-hydroxypropionate cycle used for autotrophic carbon dioxide fixation, and in the glyoxylate assimilation cycle used to regenerate acetyl-CoA and produce pyruvate as universal precursor for biosynthesis. As a part of the 3-hydroxypropionate cycle, it catalyzes the cleavage of (S)-malyl-CoA to yield acetyl-CoA and glyoxylate. As part of the glyoxylate assimilation cycle, it catalyzes the condensation of glyoxylate with propionyl-CoA to yield (2R,3S)-beta-methylmalyl-CoA, and catalyzes the cleavage of (S)-citramalyl-CoA to yield acetyl-CoA and pyruvate. The sequence is that of Malyl-CoA/beta-methylmalyl-CoA/citramalyl-CoA lyase (mcl) from Chloroflexus aurantiacus.